We begin with the raw amino-acid sequence, 27 residues long: Caerulein precursor fragment R8 (27 aa).

In terms of tissue distribution, expressed by the skin glands.

It is found in the secreted. Functionally, antimicrobial peptide. The sequence is that of Caerulein precursor fragment R8 from Xenopus ruwenzoriensis (Uganda clawed frog).